A 107-amino-acid chain; its full sequence is Urease subunit beta (107 aa).

It belongs to the urease beta subunit family. Heterotrimer of UreA (gamma), UreB (beta) and UreC (alpha) subunits. Three heterotrimers associate to form the active enzyme.

It is found in the cytoplasm. It catalyses the reaction urea + 2 H2O + H(+) = hydrogencarbonate + 2 NH4(+). The protein operates within nitrogen metabolism; urea degradation; CO(2) and NH(3) from urea (urease route): step 1/1. This is Urease subunit beta from Bacillus sp. (strain TB-90).